We begin with the raw amino-acid sequence, 306 residues long: Eukaryotic translation initiation factor 2 subunit alpha (306 aa).

Positions 17-88 (DELVVVNVRQ…EKGYIDLSKR (72 aa)) constitute an S1 motif domain. Ser52 carries the post-translational modification Phosphoserine. Thr179 bears the Phosphothreonine mark. Phosphoserine occurs at positions 273, 295, 303, and 305.

This sequence belongs to the eIF-2-alpha family. In terms of assembly, eukaryotic translation initiation factor 2 eIF2 is a heterotrimeric complex composed of an alpha, a beta and a gamma subunit.

The protein resides in the cytoplasm. It is found in the cytosol. Its function is as follows. eIF-2 functions in the early steps of protein synthesis by forming a ternary complex with GTP and initiator tRNA. This complex binds to a 40S ribosomal subunit, followed by mRNA binding to form a 43S pre-initiation complex. Junction of the 60S ribosomal subunit to form the 80S initiation complex is preceded by hydrolysis of the GTP bound to eIF-2 and release of an eIF-2-GDP binary complex. In order for eIF-2 to recycle and catalyze another round of initiation, the GDP bound to eIF-2 must exchange with GTP by way of a reaction catalyzed by eIF2B. The chain is Eukaryotic translation initiation factor 2 subunit alpha (tif211) from Schizosaccharomyces pombe (strain 972 / ATCC 24843) (Fission yeast).